Consider the following 203-residue polypeptide: ATP-dependent Clp protease proteolytic subunit (203 aa).

The active-site Nucleophile is the serine 107. Histidine 132 is an active-site residue.

Belongs to the peptidase S14 family. As to quaternary structure, fourteen ClpP subunits assemble into 2 heptameric rings which stack back to back to give a disk-like structure with a central cavity, resembling the structure of eukaryotic proteasomes.

It is found in the cytoplasm. It catalyses the reaction Hydrolysis of proteins to small peptides in the presence of ATP and magnesium. alpha-casein is the usual test substrate. In the absence of ATP, only oligopeptides shorter than five residues are hydrolyzed (such as succinyl-Leu-Tyr-|-NHMec, and Leu-Tyr-Leu-|-Tyr-Trp, in which cleavage of the -Tyr-|-Leu- and -Tyr-|-Trp bonds also occurs).. Its function is as follows. Cleaves peptides in various proteins in a process that requires ATP hydrolysis. Has a chymotrypsin-like activity. Plays a major role in the degradation of misfolded proteins. This Shewanella pealeana (strain ATCC 700345 / ANG-SQ1) protein is ATP-dependent Clp protease proteolytic subunit.